The chain runs to 347 residues: MADVMRVAVAGASGYAGGEILRLLLGHPAYAQGRLTIGAVTAAASAGSPLGEHHPHLTPLAQRVLEPTDAAVLAGHDVVFLALPHGHSAALADQLGADTLIVDCGADFRLTDAAAWERFYGAPHAGSWPYGLPELPGARERLRGARRIAVPGCYPTAALLALLPAMAEDLIEPAVTVVAVSGTSGAGRAAKTDLLGSEVIGSARAYNIAGAHRHTPEIAQGLAAVSGRDVTVSFTPVLIPTSRGILATCTARTTAPLSALRAAYEKTYDAEPFIYLMPEGQLPRTGAVIGSNAAHIAVAVDEAAGVLVAIAAIDNLVKGTAGAAVQSMNLALGWPETQGLSVIGVAP.

Cys153 is an active-site residue.

This sequence belongs to the NAGSA dehydrogenase family. Type 1 subfamily.

It localises to the cytoplasm. It carries out the reaction N-acetyl-L-glutamate 5-semialdehyde + phosphate + NADP(+) = N-acetyl-L-glutamyl 5-phosphate + NADPH + H(+). Its pathway is amino-acid biosynthesis; L-arginine biosynthesis; N(2)-acetyl-L-ornithine from L-glutamate: step 3/4. In terms of biological role, catalyzes the NADPH-dependent reduction of N-acetyl-5-glutamyl phosphate to yield N-acetyl-L-glutamate 5-semialdehyde. The polypeptide is N-acetyl-gamma-glutamyl-phosphate reductase (Mycobacterium avium (strain 104)).